A 203-amino-acid polypeptide reads, in one-letter code: Probable GTP-binding protein EngB (203 aa).

The 176-residue stretch at 24–199 (DGSEVAFAGR…HTVIETWLGL (176 aa)) folds into the EngB-type G domain. GTP-binding positions include 32-39 (GRSNAGKS), 59-63 (GRTQQ), 77-80 (DLPG), 144-147 (TKAD), and 178-180 (FSS). Residues S39 and T61 each coordinate Mg(2+).

Belongs to the TRAFAC class TrmE-Era-EngA-EngB-Septin-like GTPase superfamily. EngB GTPase family. Requires Mg(2+) as cofactor.

Functionally, necessary for normal cell division and for the maintenance of normal septation. The chain is Probable GTP-binding protein EngB from Xylella fastidiosa (strain Temecula1 / ATCC 700964).